The sequence spans 223 residues: Mating-type protein ALPHA2 (223 aa).

The segment at residues 151-213 (EFKKGKRFLK…NRRRKDKITE (63 aa)) is a DNA-binding region (homeobox; TALE-type).

The protein belongs to the TALE/M-ATYP homeobox family. As to quaternary structure, forms a heterodimer with A1.

It localises to the nucleus. Functionally, mating type proteins are sequence specific DNA-binding proteins that act as master switches in yeast differentiation by controlling gene expression in a cell type-specific fashion. Transcriptional corepressor that acts in conjunction with A1 to repress transcription of haploid-specific genes. The chain is Mating-type protein ALPHA2 (HMLALPHA2) from Kluyveromyces lactis (strain ATCC 8585 / CBS 2359 / DSM 70799 / NBRC 1267 / NRRL Y-1140 / WM37) (Yeast).